Consider the following 416-residue polypeptide: UDP-N-acetylmuramoylalanine--D-glutamate ligase (416 aa).

108 to 114 (GTVGKTT) serves as a coordination point for ATP.

The protein belongs to the MurCDEF family.

It localises to the cytoplasm. It catalyses the reaction UDP-N-acetyl-alpha-D-muramoyl-L-alanine + D-glutamate + ATP = UDP-N-acetyl-alpha-D-muramoyl-L-alanyl-D-glutamate + ADP + phosphate + H(+). The protein operates within cell wall biogenesis; peptidoglycan biosynthesis. In terms of biological role, cell wall formation. Catalyzes the addition of glutamate to the nucleotide precursor UDP-N-acetylmuramoyl-L-alanine (UMA). In Chlamydia muridarum (strain MoPn / Nigg), this protein is UDP-N-acetylmuramoylalanine--D-glutamate ligase.